A 287-amino-acid chain; its full sequence is Proteasome subunit alpha (287 aa).

Residues 241–287 (GVVAGEEPHTAAHAPSVPQPGAPAGLGDPGAPDTGGTAGSGGEAPTT) are disordered. The span at 262-275 (APAGLGDPGAPDTG) shows a compositional bias: low complexity. Residues 276-287 (GTAGSGGEAPTT) show a composition bias toward gly residues.

The protein belongs to the peptidase T1A family. In terms of assembly, the 20S proteasome core is composed of 14 alpha and 14 beta subunits that assemble into four stacked heptameric rings, resulting in a barrel-shaped structure. The two inner rings, each composed of seven catalytic beta subunits, are sandwiched by two outer rings, each composed of seven alpha subunits. The catalytic chamber with the active sites is on the inside of the barrel. Has a gated structure, the ends of the cylinder being occluded by the N-termini of the alpha-subunits. Is capped by the proteasome-associated ATPase, ARC.

It localises to the cytoplasm. Its pathway is protein degradation; proteasomal Pup-dependent pathway. Its activity is regulated as follows. The formation of the proteasomal ATPase ARC-20S proteasome complex, likely via the docking of the C-termini of ARC into the intersubunit pockets in the alpha-rings, may trigger opening of the gate for substrate entry. Interconversion between the open-gate and close-gate conformations leads to a dynamic regulation of the 20S proteasome proteolysis activity. Its function is as follows. Component of the proteasome core, a large protease complex with broad specificity involved in protein degradation. This is Proteasome subunit alpha from Geodermatophilus obscurus (strain ATCC 25078 / DSM 43160 / JCM 3152 / CCUG 61914 / KCC A-0152 / KCTC 9177 / NBRC 13315 / NRRL B-3577 / G-20).